The primary structure comprises 381 residues: Dihydroorotate dehydrogenase (quinone) (381 aa).

FMN is bound by residues 77 to 81 (AGCDK) and Ala-101. Lys-81 contacts substrate. 126 to 129 (NRLG) contacts substrate. FMN-binding residues include Asn-158 and Asn-191. Asn-191 is a substrate binding site. The Nucleophile role is filled by Ser-194. Asn-196 lines the substrate pocket. FMN is bound by residues Lys-229 and Thr-257. A substrate-binding site is contributed by 258–259 (NT). Residues Gly-287, Gly-316, and 337-338 (YT) each bind FMN.

The protein belongs to the dihydroorotate dehydrogenase family. Type 2 subfamily. Monomer. It depends on FMN as a cofactor.

It is found in the cell membrane. It catalyses the reaction (S)-dihydroorotate + a quinone = orotate + a quinol. The protein operates within pyrimidine metabolism; UMP biosynthesis via de novo pathway; orotate from (S)-dihydroorotate (quinone route): step 1/1. In terms of biological role, catalyzes the conversion of dihydroorotate to orotate with quinone as electron acceptor. The chain is Dihydroorotate dehydrogenase (quinone) (pyrD) from Synechocystis sp. (strain ATCC 27184 / PCC 6803 / Kazusa).